A 395-amino-acid chain; its full sequence is MEPGTDVRRVLVIGAGAAGLLIAQVLKKHGVPCTVFEQDTKADARPRDWNYGIYWAQSYLAECLPPELVSQLESAQVDSHTPSGSDILPTFNLATGEPLISVSAPYSYRLQRRKFLNLISTGIDIQYGKRLTMVDSDNKTVTAVFEDSSQATGNLLIGTEGAHSRVREYLLGKERAAVIPSRIVASATVSRLPEREVSALRKLHPRYCIAIHPDGYFNWLGIHDEAAQSKDCTFMIILSWISESDTGLSGTAIAADLKERANTFGEPFRTVLQSIPSETTFWHNRLSSWPTQPWNSHNGTVTLAGDAAHPMTFHRGQGLNNAITDAAYFGRQLAALDTKSTESLSAVVTAFEEELWKRGNEAVTQSDINSLSVHNWEELKSSPLFTSGLKQRSST.

The first 23 residues, 1 to 23 (MEPGTDVRRVLVIGAGAAGLLIA), serve as a signal peptide directing secretion. Residues glutamate 37, glycine 52, and arginine 112 each coordinate FAD. Residues asparagine 138 and asparagine 298 are each glycosylated (N-linked (GlcNAc...) asparagine). Aspartate 306 lines the FAD pocket.

The protein belongs to the paxM FAD-dependent monooxygenase family. The cofactor is FAD.

The protein operates within mycotoxin biosynthesis. Functionally, FAD-dependent monooxygenase; part of the gene cluster that mediates the biosynthesis of the mycotoxin cyclochlorotine, a hepatotoxic and carcinogenic cyclic chlorinated pentapeptide. The function of cctM within the pathway, if any, remains undetermined. The NRPS cctN initially catalyzes the condensation of L-serine (Ser), Pro, L-2-aminobutyrate (2Abu), Ser, and beta-Phe in this order to produce isocyclotine. After the dichlorination of Pro2 catalyzed by cctP2 to produce isocyclochlorotine, the cctO-mediated transacylation of isocyclochlorotine can furnish cyclochlorotine. The subsequent hydroxylation of cyclochlorotine by cctR yields hydroxycyclochlorotine as the final product. CctP1 probably acts as a phenylalanine aminomutase and provides the uncommon building block beta-Phe. Furthermore, 2Abu can be synthesized from threonine by one of the threonine dehydratases and transaminases localized outside of the cluster. The functions of the remaining proteins encoded by the cluster, cctM and cctT, have not been identified yet. This chain is FAD-dependent monooxygenase cctM, found in Talaromyces islandicus (Penicillium islandicum).